We begin with the raw amino-acid sequence, 206 residues long: UPF0301 protein Msil_1255 (206 aa).

This sequence belongs to the UPF0301 (AlgH) family.

This is UPF0301 protein Msil_1255 from Methylocella silvestris (strain DSM 15510 / CIP 108128 / LMG 27833 / NCIMB 13906 / BL2).